Consider the following 1410-residue polypeptide: Ribosome-binding protein 1 (1410 aa).

At 1 to 7 (MDIYDTQ) the chain is on the lumenal side. A helical transmembrane segment spans residues 8–28 (TLGVVVFGGFMVVSAIGIFLV). Over 29–1410 (STFSMKETSY…GSSSKEGTSV (1382 aa)) the chain is Cytoplasmic. Disordered regions lie at residues 44–90 (NQRK…DPAP) and 129–152 (QEKL…VEPA). Basic residues predominate over residues 52-63 (THHQKVEKKKKE). A compositionally biased stretch (basic and acidic residues) spans 64–88 (KTVEKKGKTKKKEEKPNGKIPDHDP). Residue Lys-148 forms a Glycyl lysine isopeptide (Lys-Gly) (interchain with G-Cter in SUMO2) linkage. 2 positions are modified to phosphoserine: Ser-159 and Ser-165. Disordered stretches follow at residues 173 to 648 (APKE…PLYL) and 895 to 925 (QSSH…LQSS). Composition is skewed to polar residues over residues 191–209 (TPAT…QNQS) and 225–238 (TPNQ…TPNQ). Tandem repeats lie at residues 197–206 (TQGKKAEGTQ), 207–216 (NQSKKAEGAP), 217–226 (NQGRKAEGTP), 227–236 (NQGKKTEGTP), 237–246 (NQGKKAEGTP), 247–256 (NQGKKAEGTP), 257–266 (NQGKKAEGAQ), 267–276 (NQGKKVDTTP), 277–286 (NQGKKVEGAP), 287–296 (TQGRKAEGAQ), 297–306 (NQAKKVEGAQ), 307–316 (NQGKKAEGAQ), 317–326 (NQGKKGEGAQ), 327–336 (NQGKKAEGAQ), 337–346 (NQGKKAEGAQ), 347–356 (NQGKKAEGAQ), 357–366 (NQGKKAEGAQ), 367–376 (NQGKKAEGAQ), 377–386 (NQGKKAEGAQ), 387–396 (NQGKKVEGAQ), 397–406 (NQGKKAEGAQ), 407–416 (NQGKKAEGAQ), 417–426 (NQGKKAEGAQ), 427–436 (NQGKKAEGAQ), 437–446 (NQGKKAEGAQ), 447–456 (NQGKKAEGAQ), 457–466 (NQGKKAEGAQ), 467–476 (NQGKKVEGAQ), 477–486 (NQGKKAEGAQ), 487–496 (NQGKKAEGAQ), 497–506 (NQGKKAEGAQ), 507–516 (NQGQKGEGAQ), and 517–526 (NQGKKTEGAQ). A 41 X 10 AA approximate tandem repeats of [TN]-Q-[GSA]-[KRQT]-K-[ATGSV]-[ED]-[GTAS]-[ATIS]-[PQTAS] region spans residues 197–604 (TQGKKAEGTQ…NQGKKTESAS (408 aa)). Phosphothreonine is present on residues Thr-225, Thr-235, Thr-245, and Thr-255. Polar residues-rich tracts occupy residues 265-278 (AQNQ…TPNQ) and 295-519 (AQNQ…QNQG). The span at 520–532 (KKTEGAQGKKAER) shows a compositional bias: basic and acidic residues. The stretch at 527–534 (GKKAERSP) is one 34; approximate repeat. Ser-533 carries the post-translational modification Phosphoserine. Repeat 35 spans residues 535–544 (NQGKKGEGAP). Residues 545 to 554 (IQGKKADSVA) form a 36; approximate repeat. Positions 553-567 (VANQGTKVEGITNQG) are enriched in polar residues. Tandem repeats lie at residues 555-564 (NQGTKVEGIT) and 565-574 (NQGKKAEGSP). Basic and acidic residues predominate over residues 568–581 (KKAEGSPSEGKKAE). Phosphoserine occurs at positions 573 and 583. Residues 575–584 (SEGKKAEGSP) form a 39; approximate repeat. Tandem repeats lie at residues 585–594 (NQGKKADAAA) and 595–604 (NQGKKTESAS). The span at 602 to 612 (SASVQGRNTDV) shows a compositional bias: polar residues. Ser-615 is subject to Phosphoserine. Lys-620 is covalently cross-linked (Glycyl lysine isopeptide (Lys-Gly) (interchain with G-Cter in SUMO1)). Ser-900 carries the post-translational modification Phosphoserine. Residue Lys-932 is modified to N6-acetyllysine. 2 positions are modified to phosphoserine: Ser-959 and Ser-978. 4 disordered regions span residues 1093 to 1122 (GPTL…ETQS), 1260 to 1287 (EMKS…EQDP), 1330 to 1362 (EKLR…LTSD), and 1378 to 1410 (QEQL…GTSV). Ser-1276 and Ser-1277 each carry phosphoserine. 2 stretches are compositionally biased toward basic and acidic residues: residues 1347 to 1360 (SQLK…KKLT) and 1381 to 1403 (LARE…DGSS).

It localises to the endoplasmic reticulum membrane. Its function is as follows. Acts as a ribosome receptor and mediates interaction between the ribosome and the endoplasmic reticulum membrane. This Homo sapiens (Human) protein is Ribosome-binding protein 1 (RRBP1).